A 174-amino-acid polypeptide reads, in one-letter code: Inactive protein RESTRICTED TEV MOVEMENT 1 (174 aa).

A Jacalin-type lectin domain is found at 1 to 152 (MKIGPVGKHD…LQYIGVYLRP (152 aa)).

The protein belongs to the jacalin lectin family. In terms of assembly, self-interacts. Interacts with RTM3.

The protein localises to the cytoplasm. Unable to mediate restriction of long-distance movement of the pathogenic tobacco etch virus (TEV) without causing a hypersensitive response or inducing systemic acquired resistance. In Arabidopsis thaliana (Mouse-ear cress), this protein is Inactive protein RESTRICTED TEV MOVEMENT 1 (RTM1).